The chain runs to 256 residues: Type III pantothenate kinase (256 aa).

Residue 6 to 13 (DIGNTHIV) coordinates ATP. 109-112 (GADR) contributes to the substrate binding site. Catalysis depends on D111, which acts as the Proton acceptor. D132 serves as a coordination point for K(+). T135 is a binding site for ATP. Substrate is bound at residue T186.

Belongs to the type III pantothenate kinase family. Homodimer. NH4(+) is required as a cofactor. The cofactor is K(+).

Its subcellular location is the cytoplasm. The catalysed reaction is (R)-pantothenate + ATP = (R)-4'-phosphopantothenate + ADP + H(+). The protein operates within cofactor biosynthesis; coenzyme A biosynthesis; CoA from (R)-pantothenate: step 1/5. In terms of biological role, catalyzes the phosphorylation of pantothenate (Pan), the first step in CoA biosynthesis. This chain is Type III pantothenate kinase, found in Fusobacterium nucleatum subsp. nucleatum (strain ATCC 25586 / DSM 15643 / BCRC 10681 / CIP 101130 / JCM 8532 / KCTC 2640 / LMG 13131 / VPI 4355).